A 383-amino-acid chain; its full sequence is Queuine tRNA-ribosyltransferase (383 aa).

The active-site Proton acceptor is the aspartate 92. Substrate is bound by residues 92–96 (DSGGF), aspartate 146, glutamine 190, and glycine 217. The segment at 248 to 254 (GVGKPED) is RNA binding. Aspartate 267 acts as the Nucleophile in catalysis. The interval 272-276 (TRNAR) is RNA binding; important for wobble base 34 recognition. Cysteine 310, cysteine 312, cysteine 315, and histidine 341 together coordinate Zn(2+).

It belongs to the queuine tRNA-ribosyltransferase family. As to quaternary structure, homodimer. Within each dimer, one monomer is responsible for RNA recognition and catalysis, while the other monomer binds to the replacement base PreQ1. It depends on Zn(2+) as a cofactor.

The enzyme catalyses 7-aminomethyl-7-carbaguanine + guanosine(34) in tRNA = 7-aminomethyl-7-carbaguanosine(34) in tRNA + guanine. It participates in tRNA modification; tRNA-queuosine biosynthesis. Its function is as follows. Catalyzes the base-exchange of a guanine (G) residue with the queuine precursor 7-aminomethyl-7-deazaguanine (PreQ1) at position 34 (anticodon wobble position) in tRNAs with GU(N) anticodons (tRNA-Asp, -Asn, -His and -Tyr). Catalysis occurs through a double-displacement mechanism. The nucleophile active site attacks the C1' of nucleotide 34 to detach the guanine base from the RNA, forming a covalent enzyme-RNA intermediate. The proton acceptor active site deprotonates the incoming PreQ1, allowing a nucleophilic attack on the C1' of the ribose to form the product. After dissociation, two additional enzymatic reactions on the tRNA convert PreQ1 to queuine (Q), resulting in the hypermodified nucleoside queuosine (7-(((4,5-cis-dihydroxy-2-cyclopenten-1-yl)amino)methyl)-7-deazaguanosine). This Psychrobacter cryohalolentis (strain ATCC BAA-1226 / DSM 17306 / VKM B-2378 / K5) protein is Queuine tRNA-ribosyltransferase.